We begin with the raw amino-acid sequence, 304 residues long: MQKFDTKTFQGLILTLQDYWARQGCTIVQPLDMEVGAGTSHPMTCLRALGPEPMATAYVQPSRRPTDGRYGENPNRLQHYYQFQVVIKPSPENIQELYLGSLKELGMDPTIHDIRFVEDNWENPTLGAWGLGWEVWLNGMEVTQFTYFQQVGGLECKPVTGEITYGLERLAMYIQGVDSVYDLVWSDGLLGKTTYGDVFHQNEVEQSTYNFEHADVDFLFSCFEQYEKEAQHLLALEKPLPLPAYERILKAAHSFNLLDARKAISVTERQRYILRIRTLTKAVAEAYYASREALGFPMCNKKES.

This sequence belongs to the class-II aminoacyl-tRNA synthetase family. In terms of assembly, tetramer of two alpha and two beta subunits.

Its subcellular location is the cytoplasm. It carries out the reaction tRNA(Gly) + glycine + ATP = glycyl-tRNA(Gly) + AMP + diphosphate. The chain is Glycine--tRNA ligase alpha subunit from Pectobacterium atrosepticum (strain SCRI 1043 / ATCC BAA-672) (Erwinia carotovora subsp. atroseptica).